Reading from the N-terminus, the 883-residue chain is Glutamate receptor 2 (883 aa).

Residues Met1–Ser24 form the signal peptide. The Extracellular segment spans residues Asn25–Ala543. A disulfide bridge connects residues Cys78 and Cys330. 4 N-linked (GlcNAc...) asparagine glycosylation sites follow: Asn256, Asn370, Asn406, and Asn413. L-glutamate contacts are provided by Pro499, Thr501, and Arg506. The chain crosses the membrane as a helical span at residues Tyr544–Val564. Over Ser565–Glu591 the chain is Cytoplasmic. Residues Phe592–Arg607 constitute an intramembrane region (helical; Pore-forming). An intramembrane segment occupies Gln608 to Cys610. Cys610 is lipidated: S-palmitoyl cysteine. Residues Asp611–Ser616 are Cytoplasmic-facing. A helical membrane pass occupies residues Leu617 to Tyr637. The Extracellular segment spans residues Thr638–Asn812. 2 residues coordinate L-glutamate: Ser675 and Thr676. At Ser683 the chain carries Phosphoserine; by PKC. Ser717 carries the post-translational modification Phosphoserine; by PKG. Glu726 contributes to the L-glutamate binding site. Cys739 and Cys794 are joined by a disulfide. A helical membrane pass occupies residues Val813–Ile833. Over Glu834–Ile883 the chain is Cytoplasmic. Residue Cys836 is the site of S-palmitoyl cysteine attachment. Ser860 and Ser863 each carry phosphoserine. The segment at Ala867–Gly877 is required for interaction with IQSEC1. Tyr876 carries the post-translational modification Phosphotyrosine. Ser880 is subject to Phosphoserine.

This sequence belongs to the glutamate-gated ion channel (TC 1.A.10.1) family. GRIA2 subfamily. In terms of assembly, homotetramer or heterotetramer of pore-forming glutamate receptor subunits. Tetramers may be formed by the dimerization of dimers. May interact with MPP4. Forms a ternary complex with GRIP1 and CSPG4. Interacts with ATAD1 in an ATP-dependent manner. ATAD1-catalyzed ATP hydrolysis disrupts binding to ATAD1 and to GRIP1 and leads to AMPAR complex disassembly. Interacts with GRIP1 and GRIP2. Interacts with NSF via its C-terminus. Isoform 1, but not isoform 3, interacts with PICK1. Interacts with CACNG2. Interacts with GRIA1 and SYNDIG1. Part of a complex containing GRIA2, NSF and NAPA and/or NAPB. Interacts with SNX27 (via PDZ domain); the interaction is required for recycling to the plasma membrane when endocytosed and prevent degradation in lysosomes. Interacts with LRFN1. Found in a complex with GRIA1, GRIA3, GRIA4, CNIH2, CNIH3, CACNG2, CACNG3, CACNG4, CACNG5, CACNG7 and CACNG8. Interacts with CACNG5. Interacts with OLFM2. Interacts with AP4B1, AP4E1 and AP4M1; probably indirect it mediates the somatodendritic localization of GRIA2 in neurons. Forms a complex with GRIP1, NSG1 and STX12; controls the intracellular fate of AMPAR and the endosomal sorting of the GRIA2 subunit toward recycling and membrane targeting. Interacts with IQSEC1; the interaction is required for ARF6 activation. Interacts (heterotetramer form) with CNIH2 and CNIH3; this interaction promotes expression at the plasma membrane and extensively modulates their gating properties by slowing deactivation and desensitization kinetics. In terms of processing, phosphorylation at Tyr-876 is required for interaction with IQSEC1 and ARF6 activation, which in turn triggers AMPAR internalization for persistent synaptic depression. Post-translationally, palmitoylated. Depalmitoylated upon L-glutamate stimulation. ZDHHC3/GODZ specifically palmitoylates Cys-610, which leads to Golgi retention and decreased cell surface expression. In contrast, Cys-836 palmitoylation does not affect cell surface expression but regulates stimulation-dependent endocytosis. N-glycosylated. In terms of processing, ubiquitinated by RNF167, leading to its degradation.

The protein resides in the cell membrane. It is found in the postsynaptic cell membrane. Its subcellular location is the postsynaptic density membrane. The catalysed reaction is Ca(2+)(in) = Ca(2+)(out). It catalyses the reaction Na(+)(in) = Na(+)(out). Ionotropic glutamate receptor that functions as a ligand-gated cation channel, gated by L-glutamate and glutamatergic agonists such as alpha-amino-3-hydroxy-5-methyl-4-isoxazolepropionic acid (AMPA), quisqualic acid, and kainic acid. L-glutamate acts as an excitatory neurotransmitter at many synapses in the central nervous system and plays an important role in fast excitatory synaptic transmission. Binding of the excitatory neurotransmitter L-glutamate induces a conformation change, leading to the opening of the cation channel, and thereby converts the chemical signal to an electrical impulse upon entry of monovalent and divalent cations such as sodium and calcium. The receptor then desensitizes rapidly and enters in a transient inactive state, characterized by the presence of bound agonist. In the presence of CACNG4 or CACNG7 or CACNG8, shows resensitization which is characterized by a delayed accumulation of current flux upon continued application of L-glutamate. Through complex formation with NSG1, GRIP1 and STX12 controls the intracellular fate of AMPAR and the endosomal sorting of the GRIA2 subunit toward recycling and membrane targeting. The polypeptide is Glutamate receptor 2 (Macaca fascicularis (Crab-eating macaque)).